The following is a 1502-amino-acid chain: Clustered mitochondria protein homolog (1502 aa).

Disordered regions lie at residues 1–62, 571–615, 755–799, 1054–1085, 1381–1403, and 1429–1502; these read MSES…EPLD, AQAE…NPMM, AEAE…EEDR, KDQE…GETV, ARER…RLGG, and GQGG…GAKR. Positions 7 to 35 are enriched in low complexity; that stretch reads AAAQNGQAEEQQLQQQLDEQQQLEEQQQL. Over residues 53 to 62 the composition is skewed to basic and acidic residues; the sequence is KPKDSTEPLD. The 295-residue stretch at 399–693 folds into the Clu domain; the sequence is EILRTQLAFL…RLAPVDVEWL (295 aa). A compositionally biased stretch (acidic residues) spans 575-586; that stretch reads TEAEAETADAVE. Residues 587 to 606 show a composition bias toward basic and acidic residues; sequence GEQKKEDWVDVEKPTEKSGS. Positions 781-792 are enriched in low complexity; the sequence is EEQSAAASAAAA. The segment covering 1054–1069 has biased composition (basic and acidic residues); it reads KDQEEEENKREENIKS. Over residues 1429–1451 the composition is skewed to low complexity; it reads GQGGNPSANAAAATAGQGEQANG. Residues 1462–1471 are compositionally biased toward basic and acidic residues; sequence RGTESLEELV. The span at 1486–1502 shows a compositional bias: basic residues; it reads KRGKNALRGKRRTGAKR.

It belongs to the CLU family. May associate with the eukaryotic translation initiation factor 3 (eIF-3) complex.

Its subcellular location is the cytoplasm. Its function is as follows. mRNA-binding protein involved in proper cytoplasmic distribution of mitochondria. This chain is Clustered mitochondria protein homolog, found in Cryptococcus neoformans var. neoformans serotype D (strain B-3501A) (Filobasidiella neoformans).